Here is a 217-residue protein sequence, read N- to C-terminus: Uracil-DNA glycosylase (217 aa).

Catalysis depends on aspartate 62, which acts as the Proton acceptor.

Belongs to the uracil-DNA glycosylase (UDG) superfamily. UNG family.

Its subcellular location is the cytoplasm. The enzyme catalyses Hydrolyzes single-stranded DNA or mismatched double-stranded DNA and polynucleotides, releasing free uracil.. Excises uracil residues from the DNA which can arise as a result of misincorporation of dUMP residues by DNA polymerase or due to deamination of cytosine. This is Uracil-DNA glycosylase from Streptococcus pneumoniae (strain Hungary19A-6).